Reading from the N-terminus, the 487-residue chain is Virulence sensor histidine kinase PhoQ (487 aa).

At 1-16 (MNKFARHFLPLSLRVR) the chain is on the cytoplasmic side. Residues 17–37 (FLLATAGVVLVLSLAYGIVAL) traverse the membrane as a helical segment. Residues 38–193 (VGYSVSFDKT…ELKRSYMVWS (156 aa)) lie on the Periplasmic side of the membrane. Residues Asp-151 and Asp-152 each coordinate a divalent metal cation. Residues 194–214 (WFVYVLAANLLLVIPLLWIAA) traverse the membrane as a helical segment. Residues 215–266 (WWSLRPIEALAREVRELEDHHREMLNPETTRELTSLVRNLNQLLKSERERYN) enclose the HAMP domain. The Cytoplasmic segment spans residues 215 to 487 (WWSLRPIEAL…GRQHPTQKEE (273 aa)). In terms of domain architecture, Histidine kinase spans 274–481 (DLTHSLKTPL…RMEVVFGRQH (208 aa)). His-277 carries the phosphohistidine; by autocatalysis modification. Position 386 (Asn-386) interacts with Mg(2+). Residues 386–394 (NVLDNACKY), 416–421 (DDGPGI), and 435–447 (RADT…GVGL) contribute to the ATP site. Gln-443 contributes to the Mg(2+) binding site.

Homodimer.

The protein resides in the cell inner membrane. The catalysed reaction is ATP + protein L-histidine = ADP + protein N-phospho-L-histidine.. Member of the two-component regulatory system PhoP/PhoQ which regulates the expression of genes involved in virulence and resistance to host defense antimicrobial peptides. In low periplasmic Mg(2+), PhoQ functions as a membrane-associated protein kinase that undergoes autophosphorylation and subsequently transfers the phosphate to PhoP, which results in the expression of PhoP-activated genes (PAG) and repression of PhoP-repressed genes (PRG). In high periplasmic Mg(2+), acts as a protein phosphatase that dephosphorylates phospho-PhoP, which results in the repression of PAG and may lead to expression of some PRG. The polypeptide is Virulence sensor histidine kinase PhoQ (phoQ) (Salmonella paratyphi A (strain ATCC 9150 / SARB42)).